A 306-amino-acid polypeptide reads, in one-letter code: Recombination-associated protein RdgC (306 aa).

It belongs to the RdgC family.

It is found in the cytoplasm. The protein localises to the nucleoid. May be involved in recombination. The polypeptide is Recombination-associated protein RdgC (Pseudomonas putida (strain GB-1)).